The chain runs to 453 residues: Carbamoyl phosphate synthase arginine-specific small chain (453 aa).

Residues 1-28 (MFARVFKAMPARAPAFTSVNASIQSRFM) constitute a mitochondrion transit peptide. The Glutamine amidotransferase type-1 domain maps to 219–406 (HVAVIDCGVK…LDSVVKYKNH (188 aa)). Catalysis depends on Cys-295, which acts as the Nucleophile. Catalysis depends on residues His-379 and Glu-381.

It belongs to the CarA family. In terms of assembly, heterodimer composed of 2 chains; the small (or glutamine) chain promotes the hydrolysis of glutamine to ammonia, which is used by the large (or ammonia) chain to synthesize carbamoyl phosphate.

It localises to the mitochondrion matrix. It catalyses the reaction hydrogencarbonate + L-glutamine + 2 ATP + H2O = carbamoyl phosphate + L-glutamate + 2 ADP + phosphate + 2 H(+). The enzyme catalyses L-glutamine + H2O = L-glutamate + NH4(+). The protein operates within amino-acid biosynthesis; L-arginine biosynthesis; carbamoyl phosphate from bicarbonate: step 1/1. Small subunit of the arginine-specific carbamoyl phosphate synthase (CPSase). CPSase catalyzes the formation of carbamoyl phosphate from the ammonia moiety of glutamine, carbonate, and phosphate donated by ATP, the first step of the arginine biosynthetic pathway. The small subunit (glutamine amidotransferase) binds and cleaves glutamine to supply the large subunit with the substrate ammonia. The protein is Carbamoyl phosphate synthase arginine-specific small chain (cpa1) of Aspergillus niger (strain ATCC MYA-4892 / CBS 513.88 / FGSC A1513).